The sequence spans 135 residues: uncharacterized protein (135 aa).

4 helical membrane passes run 7–25 (WSAAVLAAAVSFLYGEWTI), 29–51 (ILLTLVVIDYGTGLVAAGVTGNI), 64–85 (VFIFVMVAIAHMIDTVLLEVGI), and 89–108 (ALIFMAAVVFYIVNELISIF).

Belongs to the bacteriophage holin family. Cp-1 holin subfamily.

It is found in the cell membrane. This is an uncharacterized protein from Halalkalibacterium halodurans (strain ATCC BAA-125 / DSM 18197 / FERM 7344 / JCM 9153 / C-125) (Bacillus halodurans).